The sequence spans 108 residues: Small proline-rich protein 2H (108 aa).

Residues 1–11 (MSYQQQQCKQP) are compositionally biased toward low complexity. The segment at 1 to 22 (MSYQQQQCKQPCQPPPVCPPPQ) is disordered. The segment covering 12–22 (CQPPPVCPPPQ) has biased composition (pro residues). Tandem repeats lie at residues 21–29 (PQCPEPCPP), 30–38 (PKCPEPCPP), 39–47 (PKCTEPCPP), 48–56 (PKCPEPCPP), 57–65 (PKCPEPCPP), 66–74 (PKCPEPCPP), and 75–83 (PKCTEPCPP). A 7 X 9 AA tandem repeats of P-[KQ]-C-[PT]-E-P-C-P-P region spans residues 21-83 (PQCPEPCPPP…PPKCTEPCPP (63 aa)). The tract at residues 83 to 108 (PPSYQQKCPSVQPSPPCQQKCPPKNK) is disordered. A compositionally biased stretch (low complexity) spans 87–108 (QQKCPSVQPSPPCQQKCPPKNK).

This sequence belongs to the cornifin (SPRR) family. Expressed weakly in uterus.

Its subcellular location is the cytoplasm. Cross-linked envelope protein of keratinocytes. It is a keratinocyte protein that first appears in the cell cytosol, but ultimately becomes cross-linked to membrane proteins by transglutaminase. All that results in the formation of an insoluble envelope beneath the plasma membrane. The protein is Small proline-rich protein 2H (Sprr2h) of Mus musculus (Mouse).